Here is a 1335-residue protein sequence, read N- to C-terminus: Aldehyde oxidase 2 (1335 aa).

The 2Fe-2S ferredoxin-type domain occupies 8–95 (DVLVFFVNGR…GAAVTTVEGV (88 aa)). [2Fe-2S] cluster is bound by residues Cys47, Cys52, Cys55, and Cys77. A Mo-molybdopterin-binding site is contributed by Gln116. The [2Fe-2S] cluster site is built by Cys117, Cys120, Cys152, and Cys154. Cys154 is a Mo-molybdopterin binding site. One can recognise an FAD-binding PCMH-type domain in the interval 242–427 (FRGDRVTWVS…ESVHIPHSQK (186 aa)). FAD is bound by residues 270-277 (LVLGNTAL), Ala351, Ser360, His364, Asp373, and Leu417. Mo-molybdopterin is bound by residues 821–822 (GF), 1103–1106 (ASVG), Gln1218, and Leu1285. Glu1287 (proton acceptor; for azaheterocycle hydroxylase activity) is an active-site residue.

The protein belongs to the xanthine dehydrogenase family. Homodimer. Requires [2Fe-2S] cluster as cofactor. FAD is required as a cofactor. It depends on Mo-molybdopterin as a cofactor. As to expression, detected in kidney, Harderian gland and olfactory mucosa.

Its subcellular location is the cytoplasm. The enzyme catalyses an aldehyde + O2 + H2O = a carboxylate + H2O2 + H(+). Its function is as follows. Oxidase with broad substrate specificity, oxidizing aromatic azaheterocycles, such as phthalazine, as well as aldehydes, such as benzaldehyde and retinal. This is Aldehyde oxidase 2 (AOX2) from Cavia porcellus (Guinea pig).